A 368-amino-acid polypeptide reads, in one-letter code: Propane 2-monooxygenase, hydroxylase component small subunit (368 aa).

Belongs to the TmoE/XamoE family. In terms of assembly, the propane 2-monooxygenase multicomponent enzyme system is composed of an electron transfer component and a monooxygenase component interacting with the effector protein MimD. The electron transfer component is composed of a reductase (MimB), and the monooxygenase component is formed by a large subunit (MimA) and a small subunit (MimC). Requires the presence of the chaperonin-like protein MimG to ensure a productive folding, resulting of a soluble MimC, which leads to the active form of MimABCD.

The catalysed reaction is propane + NADH + O2 + H(+) = propan-2-ol + NAD(+) + H2O. It carries out the reaction acetone + NADH + O2 + H(+) = hydroxyacetone + NAD(+) + H2O. It catalyses the reaction butan-2-one + NADH + O2 + H(+) = 1-hydroxy-2-butanone + NAD(+) + H2O. The enzyme catalyses phenol + NADH + O2 + H(+) = hydroquinone + NAD(+) + H2O. Functionally, component of the propane 2-monooxygenase multicomponent enzyme system which is involved in the degradation of propane via the O2-dependent hydroxylation of propane. Also involved in the degradation of acetone via the O2-dependent hydroxylation of acetone. Also able to catalyze the oxidation of phenol, methylethylketone (2-butanone), 1-propanol and 2-propanol. In Mycolicibacterium goodii (Mycobacterium goodii), this protein is Propane 2-monooxygenase, hydroxylase component small subunit.